Reading from the N-terminus, the 682-residue chain is Potassium-transporting ATPase ATP-binding subunit (682 aa).

4 helical membrane-spanning segments follow: residues 34 to 54, 58 to 78, 219 to 239, and 254 to 274; these read PVMF…LAMV, IAGS…TVLF, IALT…TATL, and VLVA…LSAI. The active-site 4-aspartylphosphate intermediate is aspartate 307. ATP contacts are provided by residues aspartate 344, glutamate 348, 377–384, and lysine 395; that span reads FTAQSRMS. Positions 518 and 522 each coordinate Mg(2+). 3 consecutive transmembrane segments (helical) span residues 588–608, 616–636, and 662–682; these read FAII…LNVM, AILS…PLAL, and LVVP…LGLA.

Belongs to the cation transport ATPase (P-type) (TC 3.A.3) family. Type IA subfamily. As to quaternary structure, the system is composed of three essential subunits: KdpA, KdpB and KdpC.

It localises to the cell inner membrane. It catalyses the reaction K(+)(out) + ATP + H2O = K(+)(in) + ADP + phosphate + H(+). Part of the high-affinity ATP-driven potassium transport (or Kdp) system, which catalyzes the hydrolysis of ATP coupled with the electrogenic transport of potassium into the cytoplasm. This subunit is responsible for energy coupling to the transport system and for the release of the potassium ions to the cytoplasm. This is Potassium-transporting ATPase ATP-binding subunit from Salmonella paratyphi A (strain ATCC 9150 / SARB42).